We begin with the raw amino-acid sequence, 503 residues long: Sarpagan bridge enzyme 1 (503 aa).

Residues 3-23 (ISVTTSIALATIVFFLYKLAT) form a helical; Signal-anchor for type II membrane protein membrane-spanning segment. Position 442 (C442) interacts with heme.

This sequence belongs to the cytochrome P450 family. Heme serves as cofactor. As to expression, highly expressed in roots. Expressed at low levels in leaves, stems and flowers.

The protein localises to the endoplasmic reticulum membrane. The catalysed reaction is (19E)-geissoschizine + reduced [NADPH--hemoprotein reductase] + O2 = polyneuridine aldehyde + oxidized [NADPH--hemoprotein reductase] + 2 H2O + H(+). The enzyme catalyses tetrahydroalstonine + A + reduced [NADPH--hemoprotein reductase] + O2 = alstonine + AH2 + oxidized [NADPH--hemoprotein reductase] + 2 H2O + H(+). It carries out the reaction ajmalicine + A + reduced [NADPH--hemoprotein reductase] + O2 = serpentine + AH2 + oxidized [NADPH--hemoprotein reductase] + 2 H2O + H(+). It participates in alkaloid biosynthesis; ajmaline biosynthesis. Functionally, monooxygenase involved in the biosynthesis of ajmaline-type monoterpenoid indole alkaloids (MIAs) natural products, important plant-derived pharmaceuticals used in the therapy of heart disorders. Converts by cyclization the strictosidine-derived geissoschizine to the sarpagan alkaloid polyneuridine aldehyde, precursor of vomilenine, an intermediate chemical in the biosynthesis of ajmaline. Converts by aromatization the tetrahydro-beta-carboline alkaloids tetrahydroalstonine and ajmalicine to the corresponding beta-carboline alkaloids alstonine and serpentine, respectively. This chain is Sarpagan bridge enzyme 1, found in Rauvolfia serpentina (Serpentine wood).